Consider the following 274-residue polypeptide: Diaminopimelate epimerase (274 aa).

Substrate is bound by residues N11, Q44, and N64. C73 serves as the catalytic Proton donor. Substrate-binding positions include 74–75 (GN), N157, N190, and 208–209 (ER). C217 serves as the catalytic Proton acceptor. 218–219 (GS) provides a ligand contact to substrate.

Belongs to the diaminopimelate epimerase family. As to quaternary structure, homodimer.

The protein localises to the cytoplasm. The catalysed reaction is (2S,6S)-2,6-diaminopimelate = meso-2,6-diaminopimelate. It functions in the pathway amino-acid biosynthesis; L-lysine biosynthesis via DAP pathway; DL-2,6-diaminopimelate from LL-2,6-diaminopimelate: step 1/1. Catalyzes the stereoinversion of LL-2,6-diaminopimelate (L,L-DAP) to meso-diaminopimelate (meso-DAP), a precursor of L-lysine and an essential component of the bacterial peptidoglycan. This chain is Diaminopimelate epimerase, found in Yersinia pseudotuberculosis serotype O:1b (strain IP 31758).